A 315-amino-acid polypeptide reads, in one-letter code: Cobalamin biosynthesis protein CobD (315 aa).

A run of 5 helical transmembrane segments spans residues 48–70 (IAGI…LSVQ), 75–94 (LHWI…TIAI), 148–170 (LVDG…AMLY), 208–230 (ITSY…SLYI), and 292–314 (LILL…AAYF).

It belongs to the CobD/CbiB family.

It is found in the cell membrane. It participates in cofactor biosynthesis; adenosylcobalamin biosynthesis. Converts cobyric acid to cobinamide by the addition of aminopropanol on the F carboxylic group. The protein is Cobalamin biosynthesis protein CobD of Leptospira interrogans serogroup Icterohaemorrhagiae serovar copenhageni (strain Fiocruz L1-130).